Here is a 260-residue protein sequence, read N- to C-terminus: Small ribosomal subunit protein cS22 (260 aa).

The transit peptide at 1–62 directs the protein to the chloroplast; it reads MATISSILPC…TNPPLLKVRA (62 aa). Over residues 63 to 78 the composition is skewed to low complexity; it reads VVTEETSSSSTASSSS. The segment at 63–83 is disordered; it reads VVTEETSSSSTASSSSDGEGA. RRM domains lie at 84-162 and 184-260; these read RRLY…ITEK and YKVY…VNKA.

As to quaternary structure, component of the chloroplast small ribosomal subunit (SSU). Mature 70S chloroplast ribosomes of higher plants consist of a small (30S) and a large (50S) subunit. The 30S small subunit contains 1 molecule of ribosomal RNA (16S rRNA) and 24 different proteins. The 50S large subunit contains 3 rRNA molecules (23S, 5S and 4.5S rRNA) and 33 different proteins.

The protein localises to the plastid. Its subcellular location is the chloroplast. Its function is as follows. Component of the chloroplast ribosome (chloro-ribosome), a dedicated translation machinery responsible for the synthesis of chloroplast genome-encoded proteins, including proteins of the transcription and translation machinery and components of the photosynthetic apparatus. cS22 may have a role in the recruitment of stored chloroplast mRNAs for active protein synthesis. This chain is Small ribosomal subunit protein cS22 (PSRP2), found in Spinacia oleracea (Spinach).